The chain runs to 1848 residues: Unconventional myosin-Vb (1848 aa).

At Met1 the chain carries N-acetylmethionine. Residues Ser8 to Pro60 form the Myosin N-terminal SH3-like domain. The segment at Val21–Leu40 is requires for interaction with LIMA1. The 693-residue stretch at Val69 to Ala761 folds into the Myosin motor domain. Gly163–Thr170 lines the ATP pocket. The segment at Lys596–Lys630 is disordered. An actin-binding region spans residues Leu640–Asp662. IQ domains follow at residues Ile769 to Cys798, Leu792 to Lys821, Val817 to Ala848, Val840 to Lys869, Thr865 to Met896, and Ile888 to Lys917. Coiled-coil stretches lie at residues Ala899–Thr1266 and Arg1341–Glu1471. 2 disordered regions span residues Gln1093–Asp1123 and Gln1166–Asn1192. A compositionally biased stretch (polar residues) spans Pro1101–Ile1121. Positions Gln1166–Gln1179 are enriched in basic and acidic residues. Ser1446 carries the phosphoserine modification. The region spanning Thr1526–Glu1803 is the Dilute domain.

The protein belongs to the TRAFAC class myosin-kinesin ATPase superfamily. Myosin family. In terms of assembly, component of the CART complex, at least composed of ACTN4, HGS/HRS, MYO5B and TRIM3. Interacts with RAB11FIP2, RAB11A, and RAB8A. Found in a complex with CFTR and RAB11A. Interacts with NPC1L1;. Interacts with LIMA1.

Its subcellular location is the cytoplasm. In terms of biological role, may be involved in vesicular trafficking via its association with the CART complex. The CART complex is necessary for efficient transferrin receptor recycling but not for EGFR degradation. Required in a complex with RAB11A and RAB11FIP2 for the transport of NPC1L1 to the plasma membrane. Together with RAB11A participates in CFTR trafficking to the plasma membrane and TF (transferrin) recycling in nonpolarized cells. Together with RAB11A and RAB8A participates in epithelial cell polarization. Together with RAB25 regulates transcytosis. Required for proper localization of bile salt export pump ABCB11 at the apical/canalicular plasma membrane of hepatocytes. The protein is Unconventional myosin-Vb (MYO5B) of Homo sapiens (Human).